Here is a 167-residue protein sequence, read N- to C-terminus: Transcriptional repressor NrdR (167 aa).

Residues 3 to 34 (CPFCRNPDSRVVDSRMADDGSAIRRRRQCPEC) fold into a zinc finger. One can recognise an ATP-cone domain in the interval 46-136 (LSVIKRSGVG…VYQAFESLED (91 aa)). Residues 148-167 (AQEDAAERPATPRKPEKTSL) are disordered.

Belongs to the NrdR family. Zn(2+) serves as cofactor.

Functionally, negatively regulates transcription of bacterial ribonucleotide reductase nrd genes and operons by binding to NrdR-boxes. In Pseudarthrobacter chlorophenolicus (strain ATCC 700700 / DSM 12829 / CIP 107037 / JCM 12360 / KCTC 9906 / NCIMB 13794 / A6) (Arthrobacter chlorophenolicus), this protein is Transcriptional repressor NrdR.